A 98-amino-acid polypeptide reads, in one-letter code: RING finger protein Z (98 aa).

Residues 1–10 are compositionally biased toward basic and acidic residues; it reads MGNTKTKDRQ. A disordered region spans residues 1 to 26; it reads MGNTKTKDRQYQSNSSQPTNTSAPVL. Gly-2 is lipidated: N-myristoyl glycine; by host. Residues 11–23 show a composition bias toward polar residues; that stretch reads YQSNSSQPTNTSA. Residues 41-77 form an RING-type; atypical zinc finger; it reads CRCCWFADTNLVNCSNHYLCLKCLNTMLRRSNLCDIC. Residues 91 to 94 carry the PTAP/PSAP motif motif; it reads PSAP.

Belongs to the arenaviridae Z protein family. As to quaternary structure, interacts with protein NP; this interaction probably directs the encapsidated genome to budding sites. Interacts (via RING domain) with polymerase L; this interaction inhibits viral transcription and replication, Z partially blocks the product exit tunnel for the releasing nascent RNA product. Interacts with the glycoprotein complex; this interaction plays a role in virion budding. Interacts with host eIF4E; this interaction results in eIF4E reduced affinity for its substrate, the 5'-m7 G cap structure. Interacts (via late-budding domain) with host TSG101; this interaction is essential for budding and release of viral particles. Interacts with host RPLP0; this interaction may serve to load ribosome-like particles inside the virion. Interacts with host PML; this interaction induces PML bodies redistribution in the cytoplasm upon viral infection. In terms of processing, myristoylation is required for the role of RING finger protein Z in assembly and budding.

Its subcellular location is the virion. The protein resides in the host cytoplasm. It localises to the host perinuclear region. It is found in the host cell membrane. Plays a crucial role in virion assembly and budding. Expressed late in the virus life cycle, it acts as an inhibitor of viral transcription and RNA synthesis by interacting with the viral polymerase L. Presumably recruits the NP encapsidated genome to cellular membranes at budding sites via direct interaction with NP. Plays critical roles in the final steps of viral release by interacting with host TSG101, a member of the vacuolar protein-sorting pathway and using other cellular host proteins involved in vesicle formation pathway. The budding of the virus progeny occurs after association of protein Z with the viral glycoprotein complex SSP-GP1-GP2 at the cell periphery, step that requires myristoylation of protein Z. Also selectively represses protein production by associating with host eIF4E. In cell-based minigenome assay, has an inhibitory effect on the ribonucleoprotein machinery (vRNP), which is responsible for the replication and transcription of the viral genome. This Chapare mammarenavirus (isolate Human/Bolivia/810419/2003) protein is RING finger protein Z.